A 579-amino-acid chain; its full sequence is MNKLYIGNLSDHAGPADLESVFKDAKIPVAGPFLVKTGYAFVDCPDEGWALKAIEALSGKMELHGKPMEVEHSVPKRQRIRKLQIRNIPPHLQWEVLDSLLVQYGVVESCEQVNTDSETAVVNVTYSSKDQARQALDKLNGFQLENFTLKVAYIPDETAAQQNPSPQLRGRRGPGQRGSSRQASPGSVSKQKPCDLPLRLLVPTQFVGAIIGKEGATIRNITKQTQSKIDVHRKENTGAAEKSITILSTPEGTSAACKSILEIMHKEAQDIKFTEEIPLKILAHNNFVGRLIGKEGRNLKKIEQDTDTKITISPLQELTLYNPERTITVKGSVETCAKAEEEIMKKIRESYENDIASMNLQAHLIPGLNLNALGLFPPTSGMPPPTSGPPSTLTPPYPQFEQSETETVHLFIPALSVGAIIGKQGQHIKQLSRFAGASIKIAPAEAPDAKVRMVIITGPPEAQFKAQGRIYGKIKEENFVSPKEEVKLEAHIRVPSFAAGRVIGKGGKTVNELQSLSSAEVVVPRDQTPDENDQVVVKITGHFYACQVAQRKIQEILTQVKQHQQQKALQSGPPQSRRK.

2 consecutive RRM domains span residues 2 to 75 and 81 to 156; these read NKLY…HSVP and RKLQ…YIPD. Positions 158–192 are disordered; sequence TAAQQNPSPQLRGRRGPGQRGSSRQASPGSVSKQK. Residue serine 165 is modified to Phosphoserine. Residue serine 184 is modified to Phosphoserine; by MTOR. 3 KH domains span residues 195–260, 276–343, and 405–470; these read DLPL…CKSI, EIPL…EEEI, and TETV…QGRI. Glycyl lysine isopeptide (Lys-Gly) (interchain with G-Cter in SUMO2) cross-links involve residues lysine 450 and lysine 475. Residues 487–553 enclose the KH 4 domain; that stretch reads KLEAHIRVPS…YACQVAQRKI (67 aa). Phosphothreonine is present on threonine 528.

It belongs to the RRM IMP/VICKZ family. In terms of assembly, can form homooligomers and heterooligomers with IGF2BP1 and IGF2BP3 in an RNA-dependent manner. Interacts with IGF2BP1. Interacts with ELAVL1, DHX9, HNRNPU, MATR3 and PABPC1. In terms of tissue distribution, expressed in oocytes, spermatogonia and spermatocytes (at protein level).

Its subcellular location is the nucleus. It localises to the cytoplasm. The protein resides in the P-body. It is found in the stress granule. Its function is as follows. RNA-binding factor that may recruit target transcripts to cytoplasmic protein-RNA complexes (mRNPs). This transcript 'caging' into mRNPs allows mRNA transport and transient storage. It also modulates the rate and location at which target transcripts encounter the translational apparatus and shields them from endonuclease attacks or microRNA-mediated degradation. Preferentially binds to N6-methyladenosine (m6A)-containing mRNAs and increases their stability. Binds to the 3'-UTR of CD44 mRNA and stabilizes it, hence promotes cell adhesion and invadopodia formation. Binds to beta-actin/ACTB and MYC transcripts. Increases MYC mRNA stability by binding to the coding region instability determinant (CRD) and binding is enhanced by m6A-modification of the CRD. Binds to the 5'-UTR of the insulin-like growth factor 2 (IGF2) mRNAs. This Mus musculus (Mouse) protein is Insulin-like growth factor 2 mRNA-binding protein 3 (Igf2bp3).